A 785-amino-acid chain; its full sequence is MLKAVMPRPWVCSRCVKRQIQSSRGLATASTQYREPRPVPTDHSAPGAKHDDRTLRQIFDSPDFWADFSQSSKQSYYRPGVGLFQNRYLVNPQGFEVFANTSLRKAQRIVDKVLKASTVEEYRHVARDLDRLSDLLCRVIDLSDFVRATHPNAAIQAAASRAYAKMFEYMNILNTTTGLDKQLEVAMGTPEIVAGWTEEEVVVADILKKDFAKSAIDLPRAQREKFVALSQEISEIGPDFVDYMTPAKSYLTFESSKLKGMDPVLVREHTTWGQTKIPTIGGAAAAAIRTVQNEEVRREIFMATRTASRNTVHKLEELMRKRAELAKLSRYESYSQLALGDKMAKSPASVTQFLEALAKDNNKIVQGEVSELLKFKFSNPNASSPGLQPWDKDYYMSRILASVRSHSRNSDFLSAYFSLGTVMQGLSRLFTRLYGVRLAPHETMPGETWNSDVRRLDVISETDGHVAVLYCDLFSRPGKSPNPAHFTLRCSREITTAELEEASMLSQNGLFKTDEEAANDGMATSKSSGVLKQLPTIALICDFVTMSGKSSRPALLSFNEVQTLFHEMGHAIHSILGRTSLQNVSGTRCATDFAELPSVLMEHFAADPSVLSLFARHYETDQQLPYEMVAEKLALDKRFEGSDTENQIILSMLDLAYHSDLPLSPTFNSTEIYHSLQQKHGALPVDPPGTCWQGFFGHLFGYGSTYYSYLFDRVLARRIWQVVFQGGEAGGSVHRGNGEKMKEEVLKWGGGRDPWKCLAGVLDDGRVENGDEKAMAIVGSWGVKE.

The N-terminal 27 residues, 1-27, are a transit peptide targeting the mitochondrion; that stretch reads MLKAVMPRPWVCSRCVKRQIQSSRGLA. The interval 26–52 is disordered; sequence LATASTQYREPRPVPTDHSAPGAKHDD. Zn(2+) is bound at residue H566. The active site involves E567. The Zn(2+) site is built by H570 and H573.

It belongs to the peptidase M3 family. It depends on Zn(2+) as a cofactor.

It is found in the mitochondrion matrix. The catalysed reaction is Release of an N-terminal octapeptide as second stage of processing of some proteins imported into the mitochondrion.. Its function is as follows. Cleaves proteins, imported into the mitochondrion, to their mature size. While most mitochondrial precursor proteins are processed to the mature form in one step by mitochondrial processing peptidase (MPP), the sequential cleavage by MIP of an octapeptide after initial processing by MPP is a required step for a subgroup of nuclear-encoded precursor proteins destined for the matrix or the inner membrane. The chain is Mitochondrial intermediate peptidase (oct1) from Sclerotinia sclerotiorum (strain ATCC 18683 / 1980 / Ss-1) (White mold).